The sequence spans 428 residues: Adenosylmethionine-8-amino-7-oxononanoate aminotransferase (428 aa).

Position 52 (Trp52) interacts with substrate. 112 to 113 is a binding site for pyridoxal 5'-phosphate; it reads GS. Tyr144 is a substrate binding site. Asp245 serves as a coordination point for pyridoxal 5'-phosphate. Residues Lys274 and Gly307 each contribute to the substrate site. Lys274 carries the post-translational modification N6-(pyridoxal phosphate)lysine. A pyridoxal 5'-phosphate-binding site is contributed by 308–309; the sequence is PT. Arg391 provides a ligand contact to substrate.

The protein belongs to the class-III pyridoxal-phosphate-dependent aminotransferase family. BioA subfamily. In terms of assembly, homodimer. Pyridoxal 5'-phosphate is required as a cofactor.

It localises to the cytoplasm. The catalysed reaction is (8S)-8-amino-7-oxononanoate + S-adenosyl-L-methionine = S-adenosyl-4-methylsulfanyl-2-oxobutanoate + (7R,8S)-7,8-diammoniononanoate. The protein operates within cofactor biosynthesis; biotin biosynthesis; 7,8-diaminononanoate from 8-amino-7-oxononanoate (SAM route): step 1/1. Its function is as follows. Catalyzes the transfer of the alpha-amino group from S-adenosyl-L-methionine (SAM) to 7-keto-8-aminopelargonic acid (KAPA) to form 7,8-diaminopelargonic acid (DAPA). It is the only aminotransferase known to utilize SAM as an amino donor. In Buchnera aphidicola subsp. Acyrthosiphon pisum (strain APS) (Acyrthosiphon pisum symbiotic bacterium), this protein is Adenosylmethionine-8-amino-7-oxononanoate aminotransferase.